A 273-amino-acid polypeptide reads, in one-letter code: Large ribosomal subunit protein uL2 (273 aa).

Disordered stretches follow at residues 28-53 (KPFA…TTRH) and 221-273 (RGTA…RRSK). The span at 39 to 48 (KSGGRNNNGR) shows a compositional bias: low complexity. Lysine 242 bears the N6-acetyllysine mark.

It belongs to the universal ribosomal protein uL2 family. Part of the 50S ribosomal subunit. Forms a bridge to the 30S subunit in the 70S ribosome.

Functionally, one of the primary rRNA binding proteins. Required for association of the 30S and 50S subunits to form the 70S ribosome, for tRNA binding and peptide bond formation. It has been suggested to have peptidyltransferase activity; this is somewhat controversial. Makes several contacts with the 16S rRNA in the 70S ribosome. This Escherichia coli (strain SE11) protein is Large ribosomal subunit protein uL2.